The sequence spans 147 residues: Transmembrane protein 210 (147 aa).

The first 31 residues, 1-31 (MAPGPWPVSCLRGGPLGLTYLSLLLIPAAAG), serve as a signal peptide directing secretion. At 32-47 (TYCECSLGLSREALIA) the chain is on the extracellular side. The helical transmembrane segment at 48–68 (LLVVLAGISASCFCALVIVAI) threads the bilayer. Residues 69–147 (GVLRAKGETC…PPPPPPLPPE (79 aa)) are Cytoplasmic-facing. The interval 128–147 (AIPMEASSEEPPPPPPLPPE) is disordered. Residues 137–147 (EPPPPPPLPPE) are compositionally biased toward pro residues.

The protein localises to the membrane. The protein resides in the cytoplasmic vesicle. It is found in the secretory vesicle. Its subcellular location is the acrosome. The polypeptide is Transmembrane protein 210 (TMEM210) (Homo sapiens (Human)).